The sequence spans 335 residues: Ketol-acid reductoisomerase (NADP(+)) 2 (335 aa).

In terms of domain architecture, KARI N-terminal Rossmann spans 1–180; the sequence is MKTYYEKDAN…GCTRAGVIET (180 aa). NADP(+)-binding positions include 24-27, Arg-47, Ser-51, and 81-84; these read YGSQ and DEQQ. His-106 is a catalytic residue. Residue Gly-132 coordinates NADP(+). Positions 181–326 constitute a KARI C-terminal knotted domain; that stretch reads TFQEETETDL…AELREMMSWI (146 aa). Residues Asp-189, Glu-193, Glu-225, and Glu-229 each contribute to the Mg(2+) site. Ser-250 is a substrate binding site.

The protein belongs to the ketol-acid reductoisomerase family. Mg(2+) serves as cofactor.

It carries out the reaction (2R)-2,3-dihydroxy-3-methylbutanoate + NADP(+) = (2S)-2-acetolactate + NADPH + H(+). The catalysed reaction is (2R,3R)-2,3-dihydroxy-3-methylpentanoate + NADP(+) = (S)-2-ethyl-2-hydroxy-3-oxobutanoate + NADPH + H(+). It participates in amino-acid biosynthesis; L-isoleucine biosynthesis; L-isoleucine from 2-oxobutanoate: step 2/4. Its pathway is amino-acid biosynthesis; L-valine biosynthesis; L-valine from pyruvate: step 2/4. Its function is as follows. Involved in the biosynthesis of branched-chain amino acids (BCAA). Catalyzes an alkyl-migration followed by a ketol-acid reduction of (S)-2-acetolactate (S2AL) to yield (R)-2,3-dihydroxy-isovalerate. In the isomerase reaction, S2AL is rearranged via a Mg-dependent methyl migration to produce 3-hydroxy-3-methyl-2-ketobutyrate (HMKB). In the reductase reaction, this 2-ketoacid undergoes a metal-dependent reduction by NADPH to yield (R)-2,3-dihydroxy-isovalerate. The polypeptide is Ketol-acid reductoisomerase (NADP(+)) 2 (Bacillus cereus (strain ATCC 10987 / NRS 248)).